Reading from the N-terminus, the 195-residue chain is Glucagon family neuropeptides (195 aa).

The signal sequence occupies residues 1–20 (MAKSSRATLALLIYGILMRY). A propeptide spanning residues 21–82 (SQCTPIGMGF…YYPPERRAET (62 aa)) is cleaved from the precursor. Residues 113–132 (VGEEEEDEEDSEPLSKRHSD) are disordered. The span at 115 to 124 (EEEEDEEDSE) shows a compositional bias: acidic residues. Residue K167 is modified to Lysine amide. Positions 171–195 (LVVPSVWTGIRDTVIITPEKRGKRY) are excised as a propeptide.

This sequence belongs to the glucagon family. Brain, testis, ovary and stomach. Not pancreas, pituitary, muscle and liver.

The protein localises to the secreted. Functionally, primary role of GHRH is to release GH from the pituitary. In terms of biological role, PACAP plays pivotal roles as a neurotransmitter and/or a neuromodulator. This Clarias macrocephalus (Bighead catfish) protein is Glucagon family neuropeptides.